The following is a 275-amino-acid chain: 2,3,4,5-tetrahydropyridine-2,6-dicarboxylate N-succinyltransferase (275 aa).

Positions 106 and 143 each coordinate substrate.

It belongs to the transferase hexapeptide repeat family. In terms of assembly, homotrimer.

Its subcellular location is the cytoplasm. The enzyme catalyses (S)-2,3,4,5-tetrahydrodipicolinate + succinyl-CoA + H2O = (S)-2-succinylamino-6-oxoheptanedioate + CoA. The protein operates within amino-acid biosynthesis; L-lysine biosynthesis via DAP pathway; LL-2,6-diaminopimelate from (S)-tetrahydrodipicolinate (succinylase route): step 1/3. The polypeptide is 2,3,4,5-tetrahydropyridine-2,6-dicarboxylate N-succinyltransferase (Paraburkholderia xenovorans (strain LB400)).